Here is a 145-residue protein sequence, read N- to C-terminus: Bacilliredoxin SAR1441 (145 aa).

Belongs to the bacilliredoxin family.

The chain is Bacilliredoxin SAR1441 from Staphylococcus aureus (strain MRSA252).